Consider the following 609-residue polypeptide: All-trans-retinol 13,14-reductase (609 aa).

The first 21 residues, 1 to 21 (MWITALLLVVLLLVVVHRVYV), serve as a signal peptide directing secretion.

Belongs to the carotenoid/retinoid oxidoreductase family. CrtISO subfamily. The cofactor is NAD(+). Requires NADP(+) as cofactor. It depends on FAD as a cofactor. As to expression, highly expressed in liver, kidney and heart.

The protein resides in the endoplasmic reticulum membrane. It carries out the reaction all-trans-13,14-dihydroretinol + A = all-trans-retinol + AH2. Catalyzes the saturation of all-trans-retinol to all-trans-13,14-dihydroretinol. Does not exhibit any activity toward all-trans-retinoic acid, nor 9-cis, 11-cis or 13-cis-retinol isomers. May play a role in the metabolism of vitamin A. Independently of retinol conversion, may regulate liver metabolism upstream of MLXIPL/ChREBP. May play a role in adipocyte differentiation. The polypeptide is All-trans-retinol 13,14-reductase (Retsat) (Rattus norvegicus (Rat)).